A 307-amino-acid polypeptide reads, in one-letter code: Glutaminase (307 aa).

Serine 67, asparagine 117, glutamate 161, asparagine 168, tyrosine 192, tyrosine 243, and valine 261 together coordinate substrate.

It belongs to the glutaminase family. In terms of assembly, homotetramer.

The enzyme catalyses L-glutamine + H2O = L-glutamate + NH4(+). The chain is Glutaminase from Streptomyces coelicolor (strain ATCC BAA-471 / A3(2) / M145).